The chain runs to 203 residues: ATP-dependent Clp protease proteolytic subunit 2 (203 aa).

Serine 100 functions as the Nucleophile in the catalytic mechanism. Histidine 125 is an active-site residue.

This sequence belongs to the peptidase S14 family. As to quaternary structure, fourteen ClpP subunits assemble into 2 heptameric rings which stack back to back to give a disk-like structure with a central cavity, resembling the structure of eukaryotic proteasomes.

Its subcellular location is the cytoplasm. It carries out the reaction Hydrolysis of proteins to small peptides in the presence of ATP and magnesium. alpha-casein is the usual test substrate. In the absence of ATP, only oligopeptides shorter than five residues are hydrolyzed (such as succinyl-Leu-Tyr-|-NHMec, and Leu-Tyr-Leu-|-Tyr-Trp, in which cleavage of the -Tyr-|-Leu- and -Tyr-|-Trp bonds also occurs).. Functionally, cleaves peptides in various proteins in a process that requires ATP hydrolysis. Has a chymotrypsin-like activity. Plays a major role in the degradation of misfolded proteins. This is ATP-dependent Clp protease proteolytic subunit 2 from Nocardia farcinica (strain IFM 10152).